Here is a 340-residue protein sequence, read N- to C-terminus: Protein FAM50A-A (340 aa).

Disordered regions lie at residues 1-22 and 123-178; these read MAQY…KKRE and NLEE…EEEN. A compositionally biased stretch (acidic residues) spans 124–146; sequence LEEDEECEDEEGEEEESDKEDPP. Residues 169 to 178 show a composition bias toward basic and acidic residues; sequence PDRDREEEEN.

It localises to the nucleus. In terms of biological role, probably involved in the regulation of pre-mRNA splicing. This is Protein FAM50A-A (fam50a-a) from Xenopus laevis (African clawed frog).